The following is a 528-amino-acid chain: Low affinity inorganic phosphate transporter 4 (528 aa).

The Cytoplasmic portion of the chain corresponds to 1–18 (MGLEVLEALDSARTQWYH). Residues 19 to 39 (VTAIVIAGMGFFTDAYDLFCI) form a helical membrane-spanning segment. The Extracellular portion of the chain corresponds to 40–68 (STVSKLLGRLYYFDPSTNKPGKLPPSVNN). Residues 69 to 89 (VVTGVALVGTLSGQLVFGWLG) traverse the membrane as a helical segment. Over 90-96 (DKLGRKK) the chain is Cytoplasmic. The chain crosses the membrane as a helical span at residues 97 to 117 (VYGVTLIIMVACAICSGLSFG). The Extracellular portion of the chain corresponds to 118-122 (SSAKS). The chain crosses the membrane as a helical span at residues 123 to 143 (VMITLCFFRFWLGFGIGGDYP). At 144–158 (LSATIMSEYANKRTR) the chain is on the cytoplasmic side. Residues 159 to 179 (GAFIAAVFAMQGVGIIFAGLV) traverse the membrane as a helical segment. Residues 180 to 208 (SMVFSGIFKAYYQAPRFNEDPILSTQPEG) lie on the Extracellular side of the membrane. The chain crosses the membrane as a helical span at residues 209-229 (DLLWRLILMIGAVPAAMTYYW). The Cytoplasmic segment spans residues 230-292 (RMKMPETGRY…SEFFNRHGRH (63 aa)). A helical transmembrane segment spans residues 293 to 313 (LIGTMSCWFLLDIAFYSQNLT). Topologically, residues 314-341 (QKDIYPAMGLIRQDKEMNAIDEVFQTSR) are extracellular. A helical membrane pass occupies residues 342–362 (AMFVVALFGTFPGYWFTVFFI). Topologically, residues 363–371 (EKLGRFKIQ) are cytoplasmic. Residues 372–392 (LVGFFMMSFFMFVIGVKYEYL) form a helical membrane-spanning segment. The Extracellular portion of the chain corresponds to 393–401 (KDENKNLFA). The chain crosses the membrane as a helical span at residues 402 to 422 (LLYGLTFFFANFGPNSTTFVL). At 423–433 (PAELFPTRVRS) the chain is on the cytoplasmic side. Residues 434–454 (TCHAFSAASGKAGAMVGAFGI) form a helical membrane-spanning segment. Residues 455 to 468 (QYYTLDGTPRKIRR) are Extracellular-facing. A helical membrane pass occupies residues 469–489 (AMMILAFTNLIGFFCTFLVTE). The Cytoplasmic segment spans residues 490 to 528 (TKGRSLEEISGEDGRESELTATPNDRAPGIRQDSRTEKM). Positions 497–507 (EISGEDGRESE) are enriched in basic and acidic residues. The interval 497 to 528 (EISGEDGRESELTATPNDRAPGIRQDSRTEKM) is disordered.

Belongs to the major facilitator superfamily. Phosphate:H(+) symporter (TC 2.A.1.9) family. As to expression, mostly expressed in mycorrhizal roots. Also observed in root tips of non-mycorrhizal roots, in a phosphate (Pi) depended-manner, highest expression levels being observed in low Pi conditions.

It is found in the cell membrane. The enzyme catalyses phosphate(in) + H(+)(in) = phosphate(out) + H(+)(out). Its function is as follows. Low-affinity transporter for external inorganic phosphate (Pi) probably involved in the acquisition of phosphate released by arbuscular mycorrhizal (AM) fungi (e.g. Gigaspora gigantea, Glomus versiforme and G.intraradices) during AM symbiosis; required for propper mycorrhizal arbuscule morphology. Acts as a Pi-sensing machinery at the root tip level, independently of AM fungi, involved in the regulation of early root branching and lateral roots formation. This is Low affinity inorganic phosphate transporter 4 from Medicago truncatula (Barrel medic).